A 252-amino-acid polypeptide reads, in one-letter code: ELH type 2 (252 aa).

Residues A1–S19 form the signal peptide. 3 propeptides span residues A20–E75, P92–L130, and A144–A185. Over residues A145 to H161 the composition is skewed to basic and acidic residues. The segment at A145–P171 is disordered. K222 carries the lysine amide modification.

Belongs to the molluscan ELH family. Bag cell neurons.

Its subcellular location is the secreted. Functionally, ELH acts as a neurotransmitter locally, upon neurons of the abdominal ganglion and as a hormone by diffusing into the circulating hemolymph and modulating the activity of other organs. It specifically causes contraction of smooth muscle in the ovotestis and expulsion of the egg string. Alpha-BCP decreases the activity of a cluster of neurons in the left upper quadrant of the abdominal ganglion. Its function is as follows. Beta-BCP specifically excites 2 neurons, L1 and R1, in the abdominal ganglion. This chain is ELH type 2 (ELH2), found in Aplysia parvula (Dwarf sea hare).